A 378-amino-acid chain; its full sequence is Chaperone protein DnaJ 2 (378 aa).

Residues aspartate 4–glycine 68 form the J domain. The CR-type zinc finger occupies glycine 128–arginine 210. Residues cysteine 141, cysteine 144, cysteine 158, cysteine 161, cysteine 184, cysteine 187, cysteine 198, and cysteine 201 each contribute to the Zn(2+) site. 4 CXXCXGXG motif repeats span residues cysteine 141 to glycine 148, cysteine 158 to glycine 165, cysteine 184 to glycine 191, and cysteine 198 to glycine 205.

The protein belongs to the DnaJ family. As to quaternary structure, homodimer. Requires Zn(2+) as cofactor.

Its subcellular location is the cytoplasm. In terms of biological role, participates actively in the response to hyperosmotic and heat shock by preventing the aggregation of stress-denatured proteins and by disaggregating proteins, also in an autonomous, DnaK-independent fashion. Unfolded proteins bind initially to DnaJ; upon interaction with the DnaJ-bound protein, DnaK hydrolyzes its bound ATP, resulting in the formation of a stable complex. GrpE releases ADP from DnaK; ATP binding to DnaK triggers the release of the substrate protein, thus completing the reaction cycle. Several rounds of ATP-dependent interactions between DnaJ, DnaK and GrpE are required for fully efficient folding. Also involved, together with DnaK and GrpE, in the DNA replication of plasmids through activation of initiation proteins. This Mycobacterium leprae (strain TN) protein is Chaperone protein DnaJ 2.